The sequence spans 210 residues: Dephospho-CoA kinase (210 aa).

A DPCK domain is found at 15–210 (VLGLTGGIGC…HKGYLKLALK (196 aa)). An ATP-binding site is contributed by 23-28 (GCGKTA).

The protein belongs to the CoaE family.

The protein resides in the cytoplasm. The enzyme catalyses 3'-dephospho-CoA + ATP = ADP + CoA + H(+). The protein operates within cofactor biosynthesis; coenzyme A biosynthesis; CoA from (R)-pantothenate: step 5/5. Its function is as follows. Catalyzes the phosphorylation of the 3'-hydroxyl group of dephosphocoenzyme A to form coenzyme A. The sequence is that of Dephospho-CoA kinase from Pseudoalteromonas translucida (strain TAC 125).